Reading from the N-terminus, the 443-residue chain is Maintenance of mitochondrial morphology protein 1 (443 aa).

The Lumenal portion of the chain corresponds to 1–80 (MADLETSDLS…PSNTWSFTQG (80 aa)). A helical membrane pass occupies residues 81–101 (LIVGQLSVVFVIVIFIKFFVF). The Cytoplasmic segment spans residues 102–443 (AESSPALAKS…NGDKVEDGSN (342 aa)). 2 disordered regions span residues 126–146 (KKDQ…TTAS) and 304–358 (LSAH…NDGT). Residues 131–142 (SSDDADPDDDSE) are compositionally biased toward acidic residues. One can recognise an SMP-LTD domain in the interval 165-417 (SPESLDWFNV…EPRFQVVRLP (253 aa)).

The protein belongs to the MMM1 family. Homodimer. Component of the ER-mitochondria encounter structure (ERMES) or MDM complex, composed of MMM1, MDM10, MDM12 and MDM34. An MMM1 homodimer associates with one molecule of MDM12 on each side in a pairwise head-to-tail manner, and the SMP-LTD domains of MMM1 and MDM12 generate a continuous hydrophobic tunnel for phospholipid trafficking.

The protein localises to the endoplasmic reticulum membrane. Its function is as follows. Component of the ERMES/MDM complex, which serves as a molecular tether to connect the endoplasmic reticulum (ER) and mitochondria. Components of this complex are involved in the control of mitochondrial shape and protein biogenesis, and function in nonvesicular lipid trafficking between the ER and mitochondria. The MDM12-MMM1 subcomplex functions in the major beta-barrel assembly pathway that is responsible for biogenesis of all outer membrane beta-barrel proteins, and acts in a late step after the SAM complex. The MDM10-MDM12-MMM1 subcomplex further acts in the TOM40-specific pathway after the action of the MDM12-MMM1 complex. Essential for establishing and maintaining the structure of mitochondria and maintenance of mtDNA nucleoids. The sequence is that of Maintenance of mitochondrial morphology protein 1 from Scheffersomyces stipitis (strain ATCC 58785 / CBS 6054 / NBRC 10063 / NRRL Y-11545) (Yeast).